The sequence spans 206 residues: MRNTLDNLLNAAGIVISDKQKNLLIQYVDMLNKWNKAYNLTSVRDPQQMLVRHIMDSIVVEPHLHGQRFIDVGTGPGLPGIPLAIVRPDSHFTLLDSLGKRVRFLRQVQHELQLENITPVQSRVEEFPAEPPFDGVISRAFASLHDMISWCNHLPARPAGRFYALKGVLPEDELSSLPQGVSLDQVIRLSVPDLEGERHLVVLKPN.

S-adenosyl-L-methionine contacts are provided by residues glycine 73, leucine 78, 124-125 (VE), and arginine 139.

This sequence belongs to the methyltransferase superfamily. RNA methyltransferase RsmG family.

Its subcellular location is the cytoplasm. The catalysed reaction is guanosine(527) in 16S rRNA + S-adenosyl-L-methionine = N(7)-methylguanosine(527) in 16S rRNA + S-adenosyl-L-homocysteine. Functionally, specifically methylates the N7 position of guanine in position 527 of 16S rRNA. This chain is Ribosomal RNA small subunit methyltransferase G, found in Pectobacterium carotovorum subsp. carotovorum (strain PC1).